Consider the following 92-residue polypeptide: Putative transcription elongation factor S-II-like protein 81R (92 aa).

The TFIIS-type zinc-finger motif lies at 51–91 (GTVKCPGCGSRRVHALQRQTRSADEPMTLFAMCSECGKRWT). Cys55, Cys58, Cys83, and Cys86 together coordinate Zn(2+).

This is Putative transcription elongation factor S-II-like protein 81R from Dryophytes versicolor (chameleon treefrog).